Here is a 201-residue protein sequence, read N- to C-terminus: MEITTIDTKSKLKLNKEIFAYTYNEGLVHQAVVTFMNNARSGNSAQKTRSEVSGGGKKPWNQKGTGRARAGTIRSPLWRSGGVTFASKKRDYSQKLNKKMYKRALRSIISELCRTGNLVVVSDFQCDNHKTKDFLKKMNQMEISNALIIMSEVGENEYLGSRNLIDYDICDVTTIDPVSLLRFEKVVVTEAAIKKIEEQLQ.

Positions 42–67 (GNSAQKTRSEVSGGGKKPWNQKGTGR) are disordered.

Belongs to the universal ribosomal protein uL4 family. As to quaternary structure, part of the 50S ribosomal subunit.

Functionally, one of the primary rRNA binding proteins, this protein initially binds near the 5'-end of the 23S rRNA. It is important during the early stages of 50S assembly. It makes multiple contacts with different domains of the 23S rRNA in the assembled 50S subunit and ribosome. In terms of biological role, forms part of the polypeptide exit tunnel. The polypeptide is Large ribosomal subunit protein uL4 (Legionella pneumophila (strain Corby)).